The following is a 490-amino-acid chain: Ribulose bisphosphate carboxylase large chain (490 aa).

2 residues coordinate substrate: Asn-127 and Thr-177. Lys-179 serves as the catalytic Proton acceptor. Lys-181 provides a ligand contact to substrate. Mg(2+)-binding residues include Lys-205, Asp-207, and Glu-208. The residue at position 205 (Lys-205) is an N6-carboxylysine. The Proton acceptor role is filled by His-297. Arg-298, His-330, and Ser-382 together coordinate substrate.

Belongs to the RuBisCO large chain family. Type I subfamily. As to quaternary structure, heterohexadecamer of 8 large chains and 8 small chains. It depends on Mg(2+) as a cofactor.

The protein localises to the plastid. Its subcellular location is the chloroplast. It catalyses the reaction 2 (2R)-3-phosphoglycerate + 2 H(+) = D-ribulose 1,5-bisphosphate + CO2 + H2O. The catalysed reaction is D-ribulose 1,5-bisphosphate + O2 = 2-phosphoglycolate + (2R)-3-phosphoglycerate + 2 H(+). In terms of biological role, ruBisCO catalyzes two reactions: the carboxylation of D-ribulose 1,5-bisphosphate, the primary event in carbon dioxide fixation, as well as the oxidative fragmentation of the pentose substrate in the photorespiration process. Both reactions occur simultaneously and in competition at the same active site. The sequence is that of Ribulose bisphosphate carboxylase large chain from Phaeodactylum tricornutum (strain CCAP 1055/1).